Consider the following 1237-residue polypeptide: uncharacterized protein (1237 aa).

The 122-residue stretch at 591–712 (KDMLEIYSDL…IVLSKYTQWT (122 aa)) folds into the MHD1 domain. In terms of domain architecture, C2 spans 786 to 906 (LIEALDVAES…GDYLPREEWF (121 aa)). The MHD2 domain maps to 1014–1130 (EAAIYELLDY…KPTDFLLQEC (117 aa)).

This is an uncharacterized protein from Schizosaccharomyces pombe (strain 972 / ATCC 24843) (Fission yeast).